The following is a 291-amino-acid chain: Phosphatidylglycerol--prolipoprotein diacylglyceryl transferase (291 aa).

Transmembrane regions (helical) follow at residues 24 to 44 (WYAL…RALL), 64 to 84 (FILW…VLFY), 100 to 120 (WNGG…VILF), and 125 to 145 (GLPI…GLFL). R147 contributes to the a 1,2-diacyl-sn-glycero-3-phospho-(1'-sn-glycerol) binding site. 3 helical membrane-spanning segments follow: residues 187–207 (AALE…LGAL), 211–231 (GLVL…AEFF), and 247–267 (MGML…YAAW).

It belongs to the Lgt family.

Its subcellular location is the cell inner membrane. It carries out the reaction L-cysteinyl-[prolipoprotein] + a 1,2-diacyl-sn-glycero-3-phospho-(1'-sn-glycerol) = an S-1,2-diacyl-sn-glyceryl-L-cysteinyl-[prolipoprotein] + sn-glycerol 1-phosphate + H(+). It participates in protein modification; lipoprotein biosynthesis (diacylglyceryl transfer). Catalyzes the transfer of the diacylglyceryl group from phosphatidylglycerol to the sulfhydryl group of the N-terminal cysteine of a prolipoprotein, the first step in the formation of mature lipoproteins. The sequence is that of Phosphatidylglycerol--prolipoprotein diacylglyceryl transferase from Nitrobacter winogradskyi (strain ATCC 25391 / DSM 10237 / CIP 104748 / NCIMB 11846 / Nb-255).